The following is a 261-amino-acid chain: Ice-binding protein (261 aa).

The first 20 residues, 1–20 (MSLLSIITIGLAGLGGLVNG), serve as a signal peptide directing secretion. An N-linked (GlcNAc...) asparagine glycan is attached at Asn185.

This sequence belongs to the ice-binding protein family. In terms of assembly, homodimer. Dimerization is not required for the thermal hysteresis (TH) activity. In terms of processing, glycosylated. Glycosylation is not required for the thermal hysteresis (TH) activity. Glycosylation may increase stability and secretion of this protein.

It localises to the secreted. Its function is as follows. Confers freeze tolerance. Binds to the surface of ice crystals and inhibits their growth. Has low thermal hysteresis (TH) activity, which is the ability to lower the freezing point of an aqueous solution below its melting point. The TH activity of this protein is approximately 0.2 degrees Celsius at 50 uM and 0.3 degrees Celsius at 400 uM. This is Ice-binding protein from Leucosporidium sp. (strain AY30) (Arctic yeast).